We begin with the raw amino-acid sequence, 260 residues long: Snake venom serine protease homolog (260 aa).

Residues 1 to 18 (MVLVRVLANLLMLQLSYA) form the signal peptide. The propeptide occupies 19–24 (QKSSEL). The 227-residue stretch at 25 to 251 (IIGGDECNIN…HLDWIKSIIA (227 aa)) folds into the Peptidase S1 domain. 6 disulfide bridges follow: Cys-31–Cys-165, Cys-52–Cys-68, Cys-100–Cys-258, Cys-144–Cys-212, Cys-176–Cys-191, and Cys-202–Cys-227. Asp-112 (charge relay system) is an active-site residue. Asn-123 and Asn-124 each carry an N-linked (GlcNAc...) asparagine glycan. Ser-206 functions as the Charge relay system in the catalytic mechanism.

It belongs to the peptidase S1 family. Snake venom subfamily. In terms of tissue distribution, expressed by the venom gland.

Its subcellular location is the secreted. Its function is as follows. Snake venom serine protease homolog. May act in the hemostasis system of the prey. This is Snake venom serine protease homolog from Protobothrops jerdonii (Jerdon's pitviper).